The following is a 221-amino-acid chain: Probable septum site-determining protein MinC (221 aa).

It belongs to the MinC family. Interacts with MinD and FtsZ.

Functionally, cell division inhibitor that blocks the formation of polar Z ring septums. Rapidly oscillates between the poles of the cell to destabilize FtsZ filaments that have formed before they mature into polar Z rings. Prevents FtsZ polymerization. The sequence is that of Probable septum site-determining protein MinC from Shewanella loihica (strain ATCC BAA-1088 / PV-4).